The primary structure comprises 377 residues: MKNLTIVADSNIASLDEFFNPIALGQNTEQQVQVIRVAGRDINAQLLADLQPDVLLIRSVTQIDQALLANNNSVKFVGSATIGTDHVDQDYLAERNITFANATGCSKHSVAQYVVSAILTLRPQYWAQSMTPLTLGIIGLGNIGSTLAQYASDLGWQVLGYDPLLATSDINNASLEQVLCQSDIVSLHVPLTDKKDTDTQGAMSISNNFSDYPTRHLINAETLARMSPHTMLINSARGPVIDAAALEADIDATERQVVLDVFEHEPQIAESLLSKLAIATPHIAGYTLEGKLRGTQIIYDALCEKLAVLPVLSMHQLLPLNTYLWSELKENPDRLLKFYDIKKDDTALRNKITSGQVKGSDFDQLRRDYHLRREWQA.

2 residues coordinate substrate: Ser-59 and Thr-81. Asp-162 contributes to the NAD(+) binding site. The active site involves Arg-237. Asp-260 provides a ligand contact to NAD(+). Residue Glu-265 is part of the active site. His-282 acts as the Proton donor in catalysis. Gly-285 is a binding site for NAD(+). Tyr-286 serves as a coordination point for substrate.

This sequence belongs to the D-isomer specific 2-hydroxyacid dehydrogenase family. PdxB subfamily. Homodimer.

The protein resides in the cytoplasm. It catalyses the reaction 4-phospho-D-erythronate + NAD(+) = (R)-3-hydroxy-2-oxo-4-phosphooxybutanoate + NADH + H(+). The protein operates within cofactor biosynthesis; pyridoxine 5'-phosphate biosynthesis; pyridoxine 5'-phosphate from D-erythrose 4-phosphate: step 2/5. Catalyzes the oxidation of erythronate-4-phosphate to 3-hydroxy-2-oxo-4-phosphonooxybutanoate. The polypeptide is Erythronate-4-phosphate dehydrogenase (Psychrobacter arcticus (strain DSM 17307 / VKM B-2377 / 273-4)).